The primary structure comprises 97 residues: Na(+)/H(+) antiporter subunit F1 (97 aa).

A run of 3 helical transmembrane segments spans residues 3-23, 35-55, and 60-80; these read FKIF…AMLI, VVAL…FSIL, and YMLV…AVFS.

The protein belongs to the CPA3 antiporters (TC 2.A.63) subunit F family. As to quaternary structure, may form a heterooligomeric complex that consists of seven subunits: mnhA1, mnhB1, mnhC1, mnhD1, mnhE1, mnhF1 and mnhG1.

Its subcellular location is the cell membrane. Its function is as follows. Mnh complex is a Na(+)/H(+) antiporter involved in Na(+) excretion. The polypeptide is Na(+)/H(+) antiporter subunit F1 (mnhF1) (Staphylococcus epidermidis (strain ATCC 35984 / DSM 28319 / BCRC 17069 / CCUG 31568 / BM 3577 / RP62A)).